We begin with the raw amino-acid sequence, 394 residues long: Anthocyanidin 3-O-glucosyltransferase 6 (394 aa).

The Charge relay role is filled by aspartate 37. Residues threonine 59, alanine 267, glutamine 269, histidine 284, tryptophan 287, asparagine 288, serine 289, and glutamate 292 each coordinate UDP-alpha-D-glucose. Alanine 307 contacts an anthocyanidin. Positions 308 and 309 each coordinate UDP-alpha-D-glucose.

It belongs to the UDP-glycosyltransferase family. Expressed in cotyledons and leaves.

It catalyses the reaction an anthocyanidin + UDP-alpha-D-glucose + H(+) = an anthocyanidin 3-O-beta-D-glucoside + UDP. The protein operates within pigment biosynthesis; anthocyanin biosynthesis. In terms of biological role, in the presence of other necessary color factors, this glycosylation reaction allows the accumulation of anthocyanin pigments. May be involved in glycosylation of unstable cyanohydrins to produce stable cyanoglucosides. This chain is Anthocyanidin 3-O-glucosyltransferase 6 (GT6), found in Manihot esculenta (Cassava).